Consider the following 956-residue polypeptide: Probable hypoxanthine oxidase XdhD (956 aa).

Residues Gln-414, Phe-445, and Ala-727 each contribute to the Mo-molybdopterin site.

This sequence belongs to the xanthine dehydrogenase family. It depends on [2Fe-2S] cluster as a cofactor. Requires Mo-molybdopterin as cofactor.

In terms of biological role, probably has no xanthine dehydrogenase activity; however deletion results in increased adenine sensitivity, suggesting that this protein contributes to the conversion of adenine to guanine nucleotides during purine salvage. This is Probable hypoxanthine oxidase XdhD (xdhD) from Escherichia coli O157:H7.